The sequence spans 65 residues: DNA-directed RNA polymerase subunit omega (65 aa).

The protein belongs to the RNA polymerase subunit omega family. The RNAP catalytic core consists of 2 alpha, 1 beta, 1 beta' and 1 omega subunit. When a sigma factor is associated with the core the holoenzyme is formed, which can initiate transcription.

The catalysed reaction is RNA(n) + a ribonucleoside 5'-triphosphate = RNA(n+1) + diphosphate. Its function is as follows. Promotes RNA polymerase assembly. Latches the N- and C-terminal regions of the beta' subunit thereby facilitating its interaction with the beta and alpha subunits. In Baumannia cicadellinicola subsp. Homalodisca coagulata, this protein is DNA-directed RNA polymerase subunit omega.